The primary structure comprises 126 residues: Ejaculatory bulb-specific protein 3 (126 aa).

Residues 1 to 17 form the signal peptide; that stretch reads MKMILALVVLGLVLVAA.

This sequence belongs to the insect A10/OS-D protein family. Specifically expressed in the ejaculatory bulb and seminal fluid.

Its subcellular location is the secreted. Protein component of the posterior mating plug. The chain is Ejaculatory bulb-specific protein 3 from Drosophila melanogaster (Fruit fly).